We begin with the raw amino-acid sequence, 146 residues long: uncharacterized protein (146 aa).

Positions 1–137 constitute an HTH marR-type domain; it reads MLSQEFFNSF…TINVMNQIHK (137 aa).

This is an uncharacterized protein from Staphylococcus aureus (strain MW2).